A 199-amino-acid polypeptide reads, in one-letter code: SCO2-like protein RC0042 (199 aa).

Belongs to the SCO1/2 family.

In Rickettsia conorii (strain ATCC VR-613 / Malish 7), this protein is SCO2-like protein RC0042.